A 121-amino-acid polypeptide reads, in one-letter code: DLWQFGQMILKETGKIPFPYYGAYGCYCGWGGRGGKPKAGTDRCCYVHDCCYGKLTSCPKTDDRYSYSWLDGTIVCGEDDPCKELCECDKKIAVCFRENLGTYNKKYRYHLKSCKKADKPC.

Cystine bridges form between Cys26/Cys114, Cys28/Cys45, Cys44/Cys95, Cys50/Cys121, Cys51/Cys88, Cys58/Cys82, and Cys76/Cys86. 3 residues coordinate Ca(2+): Tyr27, Gly29, and Gly31. His48 is an active-site residue. Asp49 contributes to the Ca(2+) binding site. Asp89 is a catalytic residue.

Ca(2+) serves as cofactor. As to expression, expressed by the venom gland.

It is found in the secreted. The enzyme catalyses a 1,2-diacyl-sn-glycero-3-phosphocholine + H2O = a 1-acyl-sn-glycero-3-phosphocholine + a fatty acid + H(+). Functionally, snake venom phospholipase A2 (PLA2) that induces a slight blockade of neuromuscular contraction in an indirectly stimulated chick biventer cervicis nerve-muscle preparation. Does not inhibit contraction of chick biventer cervicic nerve-muscle preparation in response to treatment with acetylcholine or KCl. The neuromuscular blockade is mediated by inhibitory action at the presynaptic motor nerve endings. Lyses skeletal myoblasts and myotubes in vitro, and intramuscular injection causes local muscle necrosis. Induces edema in the mouse foot pad. Induces a transient increase of IL-6 levels. PLA2 catalyzes the calcium-dependent hydrolysis of the 2-acyl groups in 3-sn-phosphoglycerides. This is Basic phospholipase A2 BmjeTX-I from Bothrops marajoensis (Marajo lancehead).